A 489-amino-acid chain; its full sequence is MAKAVKKEIAKSEEVVSIKAPRKEPGKKIPVVSIVGRQNVGKSTLFNSLLKKKLAITEDYPGVTRDVLSARIYQEEKDLDFYLCDTPGLDIENPDSLSQTILETAYRQLRESDVIVFLLDKNLITTADHGLLNYLRREDKVANKPIIYCVNKADKELDEFDLEEFYRMGLSEVLPISAIGRKNLGLLLEKIQFFLKDKPGKVWIEKISASKKKEAQPLPLAEEDYEFRLAIVGKPNSGKSSLLNAICGYERAVVSDVAGTTRDSIDTLLEFGDRRLLLTDTAGIRKQSKTAEALEFYSYQRTIKAIESSDLVIHLLDAKKGFGDFDKKITSLLQEKGKPFLLAVNKWDSIEDKTDKTFKEYKEKLYSRFPLLNEVPIITISATERLRVQKLMDLSFDLASRSHRKVSTSELNKNLKNWMGLAGRSFSAHQPPKMLYCTQVSTSPFHLILFVNHVEYFKSNLVSFLKKKLTETYDLQGIPIRLEFRSDRK.

2 consecutive EngA-type G domains span residues 30-199 (PVVS…KDKP) and 227-403 (FRLA…SRSH). GTP contacts are provided by residues 36–43 (GRQNVGKS), 85–89 (DTPGL), 151–154 (NKAD), 233–240 (GKPNSGKS), 280–284 (DTAGI), and 345–348 (NKWD). The 85-residue stretch at 404-488 (RKVSTSELNK…PIRLEFRSDR (85 aa)) folds into the KH-like domain.

The protein belongs to the TRAFAC class TrmE-Era-EngA-EngB-Septin-like GTPase superfamily. EngA (Der) GTPase family. In terms of assembly, associates with the 50S ribosomal subunit.

Its function is as follows. GTPase that plays an essential role in the late steps of ribosome biogenesis. In Leptospira interrogans serogroup Icterohaemorrhagiae serovar Lai (strain 56601), this protein is GTPase Der.